Consider the following 104-residue polypeptide: ATP synthase subunit c (104 aa).

A run of 2 helical transmembrane segments spans residues 31 to 51 (SMIA…IGMG) and 75 to 95 (MFIA…IALI).

Belongs to the ATPase C chain family. F-type ATPases have 2 components, F(1) - the catalytic core - and F(0) - the membrane proton channel. F(1) has five subunits: alpha(3), beta(3), gamma(1), delta(1), epsilon(1). F(0) has three main subunits: a(1), b(2) and c(10-14). The alpha and beta chains form an alternating ring which encloses part of the gamma chain. F(1) is attached to F(0) by a central stalk formed by the gamma and epsilon chains, while a peripheral stalk is formed by the delta and b chains.

The protein localises to the cell inner membrane. F(1)F(0) ATP synthase produces ATP from ADP in the presence of a proton or sodium gradient. F-type ATPases consist of two structural domains, F(1) containing the extramembraneous catalytic core and F(0) containing the membrane proton channel, linked together by a central stalk and a peripheral stalk. During catalysis, ATP synthesis in the catalytic domain of F(1) is coupled via a rotary mechanism of the central stalk subunits to proton translocation. Its function is as follows. Key component of the F(0) channel; it plays a direct role in translocation across the membrane. A homomeric c-ring of between 10-14 subunits forms the central stalk rotor element with the F(1) delta and epsilon subunits. In Sulfurimonas denitrificans (strain ATCC 33889 / DSM 1251) (Thiomicrospira denitrificans (strain ATCC 33889 / DSM 1251)), this protein is ATP synthase subunit c.